Here is a 600-residue protein sequence, read N- to C-terminus: 69 kDa paraflagellar rod protein (600 aa).

Residues 335–355 (DKQDEAWRRIQELERVLQRLG) are calmodulin-binding.

Heterodimer of a 69 kDa and a 73 kDa protein.

It is found in the cell projection. Its subcellular location is the cilium. It localises to the flagellum. The protein localises to the cytoplasm. The protein resides in the cytoskeleton. Functionally, major component of the paraflagellar rod (PFR). The PFR is a highly ordered lattices of fibrous proteins that are located inside the flagellum and assume a fixed orientation with respect to the microtubular axoneme. The polypeptide is 69 kDa paraflagellar rod protein (PFRA) (Trypanosoma brucei brucei).